A 357-amino-acid polypeptide reads, in one-letter code: Dual-specificity RNA methyltransferase RlmN (357 aa).

Catalysis depends on E89, which acts as the Proton acceptor. Residues 109-340 form the Radical SAM core domain; the sequence is EGEKYTVCVS…CTIRESKALD (232 aa). Residues C116 and C345 are joined by a disulfide bond. Positions 123, 127, and 130 each coordinate [4Fe-4S] cluster. S-adenosyl-L-methionine is bound by residues 173-174, S203, 226-228, and N302; these read GE and SLH. The active-site S-methylcysteine intermediate is the C345.

Belongs to the radical SAM superfamily. RlmN family. Requires [4Fe-4S] cluster as cofactor.

It is found in the cytoplasm. The catalysed reaction is adenosine(2503) in 23S rRNA + 2 reduced [2Fe-2S]-[ferredoxin] + 2 S-adenosyl-L-methionine = 2-methyladenosine(2503) in 23S rRNA + 5'-deoxyadenosine + L-methionine + 2 oxidized [2Fe-2S]-[ferredoxin] + S-adenosyl-L-homocysteine. The enzyme catalyses adenosine(37) in tRNA + 2 reduced [2Fe-2S]-[ferredoxin] + 2 S-adenosyl-L-methionine = 2-methyladenosine(37) in tRNA + 5'-deoxyadenosine + L-methionine + 2 oxidized [2Fe-2S]-[ferredoxin] + S-adenosyl-L-homocysteine. Specifically methylates position 2 of adenine 2503 in 23S rRNA and position 2 of adenine 37 in tRNAs. m2A2503 modification seems to play a crucial role in the proofreading step occurring at the peptidyl transferase center and thus would serve to optimize ribosomal fidelity. In Helicobacter pylori (strain J99 / ATCC 700824) (Campylobacter pylori J99), this protein is Dual-specificity RNA methyltransferase RlmN.